Consider the following 481-residue polypeptide: MEKIIEESKQGGSLILENKPENTKKLFIESYGCAMNFSDSEIVASILSGNGYNTTNVLEEADLVLVNTCSIRDKAEQTIRKRLEKYNAVKRINPKMKVGVLGCMAERLKDKFLEEEKIVDLVVGPDAYKDLPNLLNEVEEGRDAINVILSKDETYGDISPVRLMSNGITALVAITRGCDNMCTFCVVPFTRGRERSREPQSIMAEIQDLWHKGFKEITLLGQNVDSYLWYGGGLKKDFTNASEIQKATAVDFDQLLEMVAVGFPKMRIRFSTSNPQDMHESILHVMAKHSNICKHIHLPVQSGSNRILKEMNRLHTREEYMILIDKIRAIIPNASISQDMIAGFPTETEEDHQDTISLMQYVKYNFGYMYSYSERPGTLAGRKMKDDVSDEIKARRLQEIVDLQQKHAWWRSEDFIGQTVEVLVEKVSKKSTEEFSGRNSQSITVVFPKEHYKIGDFVNVKIKSCTSGTLKGEAVGYSEMN.

The MTTase N-terminal domain maps to 24 to 140 (KKLFIESYGC…LPNLLNEVEE (117 aa)). [4Fe-4S] cluster contacts are provided by cysteine 33, cysteine 69, cysteine 103, cysteine 178, cysteine 182, and cysteine 185. The Radical SAM core domain maps to 164 to 411 (MSNGITALVA…DLQQKHAWWR (248 aa)). Positions 413–476 (EDFIGQTVEV…SGTLKGEAVG (64 aa)) constitute a TRAM domain.

Belongs to the methylthiotransferase family. MiaB subfamily. As to quaternary structure, monomer. [4Fe-4S] cluster serves as cofactor.

It localises to the cytoplasm. It catalyses the reaction N(6)-dimethylallyladenosine(37) in tRNA + (sulfur carrier)-SH + AH2 + 2 S-adenosyl-L-methionine = 2-methylsulfanyl-N(6)-dimethylallyladenosine(37) in tRNA + (sulfur carrier)-H + 5'-deoxyadenosine + L-methionine + A + S-adenosyl-L-homocysteine + 2 H(+). Functionally, catalyzes the methylthiolation of N6-(dimethylallyl)adenosine (i(6)A), leading to the formation of 2-methylthio-N6-(dimethylallyl)adenosine (ms(2)i(6)A) at position 37 in tRNAs that read codons beginning with uridine. In Flavobacterium psychrophilum (strain ATCC 49511 / DSM 21280 / CIP 103535 / JIP02/86), this protein is tRNA-2-methylthio-N(6)-dimethylallyladenosine synthase.